The chain runs to 346 residues: S-adenosylmethionine:tRNA ribosyltransferase-isomerase (346 aa).

It belongs to the QueA family. As to quaternary structure, monomer.

Its subcellular location is the cytoplasm. It catalyses the reaction 7-aminomethyl-7-carbaguanosine(34) in tRNA + S-adenosyl-L-methionine = epoxyqueuosine(34) in tRNA + adenine + L-methionine + 2 H(+). The protein operates within tRNA modification; tRNA-queuosine biosynthesis. Transfers and isomerizes the ribose moiety from AdoMet to the 7-aminomethyl group of 7-deazaguanine (preQ1-tRNA) to give epoxyqueuosine (oQ-tRNA). This Chloroherpeton thalassium (strain ATCC 35110 / GB-78) protein is S-adenosylmethionine:tRNA ribosyltransferase-isomerase.